The primary structure comprises 72 residues: Male-specific sperm protein Mst84Dd (72 aa).

Belongs to the MST(3)CGP family. Testis.

This Drosophila melanogaster (Fruit fly) protein is Male-specific sperm protein Mst84Dd (Mst84Dd).